Reading from the N-terminus, the 207-residue chain is Uridine kinase (207 aa).

Position 11 to 18 (11 to 18 (GGSGSGKT)) interacts with ATP.

Belongs to the uridine kinase family.

It localises to the cytoplasm. It carries out the reaction uridine + ATP = UMP + ADP + H(+). The enzyme catalyses cytidine + ATP = CMP + ADP + H(+). Its pathway is pyrimidine metabolism; CTP biosynthesis via salvage pathway; CTP from cytidine: step 1/3. The protein operates within pyrimidine metabolism; UMP biosynthesis via salvage pathway; UMP from uridine: step 1/1. The sequence is that of Uridine kinase from Staphylococcus haemolyticus (strain JCSC1435).